A 351-amino-acid polypeptide reads, in one-letter code: CCN family member 3 (351 aa).

A signal peptide spans 1–24; that stretch reads METGGGQGLPVLLLLLLLLRPCEV. The IGFBP N-terminal domain maps to 27-101; that stretch reads REAACPRPCG…GGGAGICMVL (75 aa). 6 disulfide bridges follow: Cys-31–Cys-57, Cys-35–Cys-59, Cys-39–Cys-60, Cys-46–Cys-63, Cys-71–Cys-85, and Cys-77–Cys-98. Residues 104 to 170 form the VWFC domain; the sequence is DNCVFDGMIY…GECCEKWVCD (67 aa). The region spanning 201 to 246 is the TSP type-1 domain; sequence NCIEQTTEWSACSKSCGMGFSTRVTNRNQQCEMVKQTRLCMMRPCE. Disulfide bonds link Cys-258–Cys-295, Cys-275–Cys-309, Cys-286–Cys-325, Cys-289–Cys-327, and Cys-294–Cys-331. The CTCK domain occupies 258–332; it reads CIQTKKSMKA…NTCVCHGNCP (75 aa). Asn-274 carries N-linked (GlcNAc...) asparagine glycosylation.

It belongs to the CCN family. As to expression, brain and heart, and at a lower level in muscle and intestine, in the embryo. Lung and less so in brain and spleen, in adult chicken.

The protein resides in the secreted. It localises to the cytoplasm. The protein localises to the cell junction. It is found in the gap junction. Immediate-early protein likely to play a role in cell growth regulation. Its overexpression is associated with tumorigenesis and expression of a N-terminal-truncated version of CCN3 gene in chicken embryonic fibroblasts (CEF) is sufficient to induce the transformation of CEF in vitro. This chain is CCN family member 3 (CCN3), found in Gallus gallus (Chicken).